The primary structure comprises 81 residues: Sulfur carrier protein TusA (81 aa).

C19 serves as the catalytic Cysteine persulfide intermediate.

It belongs to the sulfur carrier protein TusA family. Interacts with IscS.

It is found in the cytoplasm. It participates in tRNA modification. Functionally, sulfur carrier protein involved in sulfur trafficking in the cell. Part of a sulfur-relay system required for 2-thiolation during synthesis of 2-thiouridine of the modified wobble base 5-methylaminomethyl-2-thiouridine (mnm(5)s(2)U) in tRNA. Interacts with IscS and stimulates its cysteine desulfurase activity. Accepts an activated sulfur from IscS, which is then transferred to TusD, and thus determines the direction of sulfur flow from IscS to 2-thiouridine formation. Also appears to be involved in sulfur transfer for the biosynthesis of molybdopterin. The polypeptide is Sulfur carrier protein TusA (Shigella boydii serotype 18 (strain CDC 3083-94 / BS512)).